Consider the following 442-residue polypeptide: SPRY domain-containing protein 3 (442 aa).

The B30.2/SPRY domain maps to D17–G204. The tract at residues E371–G394 is disordered. The span at G372–P390 shows a compositional bias: acidic residues.

The protein is SPRY domain-containing protein 3 (SPRYD3) of Homo sapiens (Human).